The primary structure comprises 483 residues: CdaA regulatory protein CdaR (483 aa).

The chain crosses the membrane as a helical span at residues 9–26 (WAVKIIALLFALLLYVAV). 4 YbbR-like domains span residues 55-135 (IPVK…TVTI), 143-228 (FPVE…KITV), 237-316 (VPFK…TLHI), and 329-394 (VPIK…VNGP). The interval 410–483 (LTSKKSNTST…STANSQSSSE (74 aa)) is disordered. A compositionally biased stretch (low complexity) spans 413–430 (KKSNTSTNDNSSNTSGNQ). Residues 431–454 (DTDKQTNDQKNNQQEDTKNTDKNN) show a composition bias toward basic and acidic residues.

In terms of assembly, interacts with CdaA.

The protein resides in the cell membrane. In terms of biological role, upon coexpression in E.coli stimulates the diadenylate cyclase activity of CdaA about 20-fold. In B.subtilis c-di-AMP is a second messenger that mediates growth, DNA repair and cell wall homeostasis; it is toxic when present in excess. This is CdaA regulatory protein CdaR from Bacillus subtilis (strain 168).